The following is a 320-amino-acid chain: MRLGPRPAALGLLLPLLLYAAVAGASKAEELHYPQGEHRADYDREALLGVQEDVDEYVKLGHEEQQRRLQSIIKKIDSDSDGFLTENELSQWIQMSFKHYAMQEAKQQFVEYDKNSDGAVTWDEYNIQMYDRVIDFDENTALDDTEEGSFRQLHLKDKKRFEKANQDSGPGLSLEEFIAFEHPEEVDYMTEFVIQEALEEHDKNGDGFVSLEEFLGDYRRDPTANEDPEWILVEKDRFVNDYDKDNDGRLDPQELLSWVVPNNQGIAQEEALHLIDEMDLNSDKKLSEEEILENQDLFLTSEATDYGRQLHDDYFYHDEL.

The N-terminal stretch at 1–25 (MRLGPRPAALGLLLPLLLYAAVAGA) is a signal peptide. EF-hand domains are found at residues 64 to 99 (EQQRRLQSIIKKIDSDSDGFLTENELSQWIQMSFKH) and 100 to 135 (YAMQEAKQQFVEYDKNSDGAVTWDEYNIQMYDRVID). Residues aspartate 77, aspartate 79, aspartate 81, glutamate 88, aspartate 113, asparagine 115, aspartate 117, and glutamate 124 each coordinate Ca(2+). Position 140 is a phosphothreonine (threonine 140). EF-hand domains are found at residues 150–185 (FRQLHLKDKKRFEKANQDSGPGLSLEEFIAFEHPEE), 189–224 (MTEFVIQEALEEHDKNGDGFVSLEEFLGDYRRDPTA), 230–265 (WILVEKDRFVNDYDKDNDGRLDPQELLSWVVPNNQG), and 266–301 (IAQEEALHLIDEMDLNSDKKLSEEEILENQDLFLTS). Ca(2+)-binding residues include aspartate 167, glutamate 176, aspartate 202, asparagine 204, aspartate 206, glutamate 213, aspartate 243, aspartate 245, aspartate 247, arginine 249, glutamate 254, aspartate 279, asparagine 281, aspartate 283, lysine 285, and glutamate 290. Positions 317–320 (HDEL) match the Prevents secretion from ER motif.

The protein belongs to the CREC family.

It localises to the endoplasmic reticulum lumen. In terms of biological role, not known. Binds calcium. In Mus musculus (Mouse), this protein is Reticulocalbin-2 (Rcn2).